A 536-amino-acid polypeptide reads, in one-letter code: Berberine bridge enzyme-like 2 (536 aa).

Positions 1-20 are cleaved as a signal peptide; it reads MKIFCLILFLISSFISTSLA. C35 and C98 are joined by a disulfide. 6 N-linked (GlcNAc...) asparagine glycosylation sites follow: N38, N73, N136, N266, N334, and N352. Residues 76–250 enclose the FAD-binding PCMH-type domain; it reads ATPKPAIVIA…LAFKIKLVPV (175 aa). The segment at residues 113-175 is a cross-link (6-(S-cysteinyl)-8alpha-(pros-histidyl)-FAD (His-Cys)); the sequence is HDYEGVSYIS…KSHGFPAGVC (63 aa).

It belongs to the oxygen-dependent FAD-linked oxidoreductase family. FAD serves as cofactor. In terms of processing, the FAD cofactor is bound via a bicovalent 6-S-cysteinyl, 8alpha-N1-histidyl FAD linkage.

The protein localises to the secreted. The protein resides in the cell wall. In Arabidopsis thaliana (Mouse-ear cress), this protein is Berberine bridge enzyme-like 2.